The sequence spans 189 residues: UPF0301 protein RC0043 (189 aa).

This sequence belongs to the UPF0301 (AlgH) family.

This is UPF0301 protein RC0043 from Rickettsia conorii (strain ATCC VR-613 / Malish 7).